The primary structure comprises 192 residues: Transmembrane protein 276 (192 aa).

A signal peptide spans 1 to 32 (MVSKPRNEWSTALSHLVLAGVSLHAAVSSVQS). 4 consecutive transmembrane segments (helical) span residues 35 to 55 (GAAAGFLLQTLAAVIMLAPEL), 63 to 83 (AGAWVATVIGLPLLAFDFHWV), 92 to 112 (LLLGGGMVLAVAGDHLGPEGC), and 114 to 134 (VAGQAVLLVVAVTILIVAVFT).

Its subcellular location is the membrane. This is Transmembrane protein 276 from Rattus norvegicus (Rat).